Consider the following 210-residue polypeptide: Chaperone protein TorD (210 aa).

This sequence belongs to the TorD/DmsD family. TorD subfamily.

It is found in the cytoplasm. In terms of biological role, involved in the biogenesis of TorA. Acts on TorA before the insertion of the molybdenum cofactor and, as a result, probably favors a conformation of the apoenzyme that is competent for acquiring the cofactor. This chain is Chaperone protein TorD, found in Salmonella schwarzengrund (strain CVM19633).